Reading from the N-terminus, the 388-residue chain is MAQRDYYDVLGVDKNASESDINKAYRKLAKKYHPDLNHEPGAEEKYKEVNEAYEVLHDKQKKAQYDQFGQAGVNGQAGFGGQGYGGFGGQGGYSSQGFGDFGDIFGDIFGSAFGGGRSRVDPTAPQKGQDLDYTMTIDFMDAIKGKKTDITYTRSEVCPTCDGSGAEKGTHPITCDKCHGTGVMTVTRQTPLGVIQQQTTCDKCGGRGTIIKHPCQTCHGKGTIDKKQTLEVKVPAGIDNGQQIRLSGQGEAGKNGGPYGDLYIVFRVKPSKEFRRNGTTIYSEAPISFAQAALGDKIRVNTVHGPVDLTIPAGTQPNTNFKLRGQGVPKINGTGNGDQEVTVKVVIPKKINDKQKEALVDYVKAGGGNISPQEKNFFERLKDKLNGE.

Residues 5 to 69 (DYYDVLGVDK…QKKAQYDQFG (65 aa)) form the J domain. A CR-type zinc finger spans residues 145 to 227 (GKKTDITYTR…CHGKGTIDKK (83 aa)). Zn(2+) contacts are provided by Cys158, Cys161, Cys175, Cys178, Cys201, Cys204, Cys215, and Cys218. CXXCXGXG motif repeat units lie at residues 158 to 165 (CPTCDGSG), 175 to 182 (CDKCHGTG), 201 to 208 (CDKCGGRG), and 215 to 222 (CQTCHGKG).

Belongs to the DnaJ family. In terms of assembly, homodimer. Zn(2+) serves as cofactor.

Its subcellular location is the cytoplasm. Participates actively in the response to hyperosmotic and heat shock by preventing the aggregation of stress-denatured proteins and by disaggregating proteins, also in an autonomous, DnaK-independent fashion. Unfolded proteins bind initially to DnaJ; upon interaction with the DnaJ-bound protein, DnaK hydrolyzes its bound ATP, resulting in the formation of a stable complex. GrpE releases ADP from DnaK; ATP binding to DnaK triggers the release of the substrate protein, thus completing the reaction cycle. Several rounds of ATP-dependent interactions between DnaJ, DnaK and GrpE are required for fully efficient folding. Also involved, together with DnaK and GrpE, in the DNA replication of plasmids through activation of initiation proteins. In Lactobacillus gasseri (strain ATCC 33323 / DSM 20243 / BCRC 14619 / CIP 102991 / JCM 1131 / KCTC 3163 / NCIMB 11718 / NCTC 13722 / AM63), this protein is Chaperone protein DnaJ.